Reading from the N-terminus, the 245-residue chain is tRNA (guanine-N(7)-)-methyltransferase (245 aa).

Positions 69, 94, 121, and 144 each coordinate S-adenosyl-L-methionine. Aspartate 144 is an active-site residue. Residues lysine 148, aspartate 180, and 217 to 220 (TKFE) contribute to the substrate site. The segment at 200 to 225 (NLSSSGDYVPRPENRPKTKFERRGEG) is disordered. Positions 209–225 (PRPENRPKTKFERRGEG) are enriched in basic and acidic residues.

It belongs to the class I-like SAM-binding methyltransferase superfamily. TrmB family.

It carries out the reaction guanosine(46) in tRNA + S-adenosyl-L-methionine = N(7)-methylguanosine(46) in tRNA + S-adenosyl-L-homocysteine. The protein operates within tRNA modification; N(7)-methylguanine-tRNA biosynthesis. In terms of biological role, catalyzes the formation of N(7)-methylguanine at position 46 (m7G46) in tRNA. This chain is tRNA (guanine-N(7)-)-methyltransferase, found in Idiomarina loihiensis (strain ATCC BAA-735 / DSM 15497 / L2-TR).